The sequence spans 142 residues: Large ribosomal subunit protein uL13 (142 aa).

The protein belongs to the universal ribosomal protein uL13 family. In terms of assembly, part of the 50S ribosomal subunit.

In terms of biological role, this protein is one of the early assembly proteins of the 50S ribosomal subunit, although it is not seen to bind rRNA by itself. It is important during the early stages of 50S assembly. The protein is Large ribosomal subunit protein uL13 of Pyrococcus horikoshii (strain ATCC 700860 / DSM 12428 / JCM 9974 / NBRC 100139 / OT-3).